The primary structure comprises 86 residues: Small ribosomal subunit protein bS18 (86 aa).

The protein belongs to the bacterial ribosomal protein bS18 family. In terms of assembly, part of the 30S ribosomal subunit. Forms a tight heterodimer with protein bS6.

In terms of biological role, binds as a heterodimer with protein bS6 to the central domain of the 16S rRNA, where it helps stabilize the platform of the 30S subunit. The polypeptide is Small ribosomal subunit protein bS18 (Campylobacter concisus (strain 13826)).